Reading from the N-terminus, the 136-residue chain is Small nuclear ribonucleoprotein Sm D3 (136 aa).

In terms of domain architecture, Sm spans 6–78 (VPIKILHEAE…IRFMILPDML (73 aa)). Residues 98–136 (GLGGLDQRGRGRGTAFRRPMGRGGPRGMSRPGGAPTFRG) are disordered.

It belongs to the snRNP core protein family.

Its subcellular location is the nucleus. It localises to the cytoplasm. The protein resides in the cytosol. Plays a role in pre-mRNA splicing as a core component of the spliceosomal U1, U2, U4 and U5 small nuclear ribonucleoproteins (snRNPs), the building blocks of the spliceosome. The sequence is that of Small nuclear ribonucleoprotein Sm D3 (snr-1) from Caenorhabditis elegans.